The sequence spans 351 residues: Dihydroorotate dehydrogenase (quinone) (351 aa).

Residues 61 to 65 (AGLDK) and Thr-85 each bind FMN. Residue Lys-65 participates in substrate binding. Position 110–114 (110–114 (NRMGF)) interacts with substrate. FMN-binding residues include Asn-139 and Asn-172. Residue Asn-172 coordinates substrate. Ser-175 serves as the catalytic Nucleophile. Residue Asn-177 participates in substrate binding. The FMN site is built by Lys-217 and Thr-245. 246-247 (NT) serves as a coordination point for substrate. Residues Gly-268, Gly-297, and 318–319 (YT) contribute to the FMN site.

The protein belongs to the dihydroorotate dehydrogenase family. Type 2 subfamily. In terms of assembly, monomer. Requires FMN as cofactor.

The protein resides in the cell membrane. It catalyses the reaction (S)-dihydroorotate + a quinone = orotate + a quinol. It participates in pyrimidine metabolism; UMP biosynthesis via de novo pathway; orotate from (S)-dihydroorotate (quinone route): step 1/1. Catalyzes the conversion of dihydroorotate to orotate with quinone as electron acceptor. The protein is Dihydroorotate dehydrogenase (quinone) of Xylella fastidiosa (strain 9a5c).